Reading from the N-terminus, the 612-residue chain is MDLEKLKDYQKHIRNFSIVAHVDHGKSTIADRILELTDTVSKRQLKNQMLDDMPLERQRGITIKMNSVQVKYHANDGEDYIFHLIDTPGHVDFSYEVSRSLAACEGAVLVVDASQGVQAQTLSNTYLALENDLEILPVLNKIDLPSADPDMAKSEIGDMLGLDASDAVEVSGKTGAGIPELLERIVTDISAPTGDLTKPLKALIFDSKYDDYRGVVMSVRIEEGTVKPGDEIMIMNTGKKYEVTEVGVSSPHPVKEDILIAGDVGYITANIKSVRETRVGDTITSAENPTAEALPGYRQIPPMVYSGMYPTDNRDYDDLKEALQKLQLNDASLEFEPETSQALGFGFRCGFLGLLHMDVVQERLEQEFDLDLIMTAPSVDYHAIMPTGEVKLIDNPADLPDAGEYKELQEPYVKAEIMVPNDFVGAVMQLCEGKRGEFQTMDYLDKYRVNVIYEMPLAEIIYDFFDQLKSSTKGYASLDYEIIGYKATNLVKIDILLNKEPIDALSFIAHREEARDRAVQMCSLLKKLIPRQNFQVDIQGAIGSKIISRATIKPYRKDVTWKIHTGDPDRRAKLLEKQKRGKKRMKSVGRVEVPQDAFMAVLRMNDDDINGK.

The tr-type G domain occupies 11-193 (KHIRNFSIVA…RIVTDISAPT (183 aa)). GTP-binding positions include 23–28 (DHGKST) and 140–143 (NKID).

It belongs to the TRAFAC class translation factor GTPase superfamily. Classic translation factor GTPase family. LepA subfamily.

It is found in the cell membrane. It carries out the reaction GTP + H2O = GDP + phosphate + H(+). Its function is as follows. Required for accurate and efficient protein synthesis under certain stress conditions. May act as a fidelity factor of the translation reaction, by catalyzing a one-codon backward translocation of tRNAs on improperly translocated ribosomes. Back-translocation proceeds from a post-translocation (POST) complex to a pre-translocation (PRE) complex, thus giving elongation factor G a second chance to translocate the tRNAs correctly. Binds to ribosomes in a GTP-dependent manner. The protein is Elongation factor 4 of Lactobacillus delbrueckii subsp. bulgaricus (strain ATCC 11842 / DSM 20081 / BCRC 10696 / JCM 1002 / NBRC 13953 / NCIMB 11778 / NCTC 12712 / WDCM 00102 / Lb 14).